We begin with the raw amino-acid sequence, 1169 residues long: DNA-directed RNA polymerase subunit beta (1169 aa).

Belongs to the RNA polymerase beta chain family. In terms of assembly, the RNAP catalytic core consists of 2 alpha, 1 beta, 1 beta' and 1 omega subunit. When a sigma factor is associated with the core the holoenzyme is formed, which can initiate transcription. Interacts with RbpA, which partially restores Rif-inhibited transcription.

The catalysed reaction is RNA(n) + a ribonucleoside 5'-triphosphate = RNA(n+1) + diphosphate. In terms of biological role, DNA-dependent RNA polymerase catalyzes the transcription of DNA into RNA using the four ribonucleoside triphosphates as substrates. This subunit often mutates to generate rifampicin (Rif) resistance. Interaction with RbpA partially restores Rif-inhibited transcription; once the subunit is Rif-resistant however RbpA no longer stimulates transcription. The protein is DNA-directed RNA polymerase subunit beta of Mycolicibacterium smegmatis (strain ATCC 700084 / mc(2)155) (Mycobacterium smegmatis).